A 103-amino-acid chain; its full sequence is Small ribosomal subunit protein uS10 (103 aa).

Belongs to the universal ribosomal protein uS10 family. As to quaternary structure, part of the 30S ribosomal subunit.

Involved in the binding of tRNA to the ribosomes. This is Small ribosomal subunit protein uS10 from Neisseria gonorrhoeae.